The primary structure comprises 402 residues: Phosphoglycerate kinase (402 aa).

Substrate contacts are provided by residues 24–26, Arg40, 63–66, Arg122, and Arg155; these read DFN and HFGR. ATP contacts are provided by residues Lys206, Gly297, Glu328, and 358–361; that span reads GGDS.

It belongs to the phosphoglycerate kinase family. Monomer.

It localises to the cytoplasm. The enzyme catalyses (2R)-3-phosphoglycerate + ATP = (2R)-3-phospho-glyceroyl phosphate + ADP. It participates in carbohydrate degradation; glycolysis; pyruvate from D-glyceraldehyde 3-phosphate: step 2/5. The chain is Phosphoglycerate kinase from Prochlorococcus marinus (strain MIT 9301).